Reading from the N-terminus, the 1154-residue chain is PDZ domain-containing protein 8 (1154 aa).

A helical membrane pass occupies residues 2-24 (GLLLMILASAVLGSFLTLLAQFF). A disordered region spans residues 66–90 (DEEPSGAAPEGGATPTAAPETPAPP). The segment covering 70-85 (SGAAPEGGATPTAAPE) has biased composition (low complexity). Positions 91-294 (TRETCYFLNA…LPNYKIRFKP (204 aa)) constitute an SMP-LTD domain. The region spanning 366–449 (TVELIKGNLQ…RVLVYYERPV (84 aa)) is the PDZ domain. Phosphoserine occurs at positions 496, 521, and 538. The segment at 548-612 (GSHPLPPKIQ…SADAPNQAEP (65 aa)) is disordered. The Phorbol-ester/DAG-type zinc-finger motif lies at 840-891 (KHSFQDTQFQNPTWCDYCKKKVWTKAASQCMFCAYVCHKKCQEKCLAETSVC). A disordered region spans residues 955 to 999 (RLSEPGTDLVEPSPKHTPNTSDNEGSDTEVCGPNSPSKRGNSTGI). Phosphoserine is present on residues Ser-967 and Ser-980. Positions 988 to 998 (NSPSKRGNSTG) are enriched in polar residues. Residues 1028–1063 (PTEERIQKLEFMLDKLQNEIDQELEHNNSLVREEKE) adopt a coiled-coil conformation. Polar residues predominate over residues 1132–1144 (SQLIDSQPFSSIS). Residues 1132–1154 (SQLIDSQPFSSISDDLFGPSESV) form a disordered region.

As to quaternary structure, interacts with MSN. In terms of assembly, (Microbial infection) Interacts with HIV-1 Gag polyprotein p55.

The protein resides in the endoplasmic reticulum membrane. Functionally, molecular tethering protein that connects endoplasmic reticulum and mitochondria membranes. PDZD8-dependent endoplasmic reticulum-mitochondria membrane tethering is essential for endoplasmic reticulum-mitochondria Ca(2+) transfer. In neurons, involved in the regulation of dendritic Ca(2+) dynamics by regulating mitochondrial Ca(2+) uptake in neurons. Plays an indirect role in the regulation of cell morphology and cytoskeletal organization. May inhibit herpes simplex virus 1 infection at an early stage. In Homo sapiens (Human), this protein is PDZ domain-containing protein 8.